A 165-amino-acid chain; its full sequence is Nucleotide-binding protein CFF8240_1664 (165 aa).

Belongs to the YajQ family.

Nucleotide-binding protein. The chain is Nucleotide-binding protein CFF8240_1664 from Campylobacter fetus subsp. fetus (strain 82-40).